We begin with the raw amino-acid sequence, 338 residues long: Glycerol-3-phosphate dehydrogenase [NAD(P)+] (338 aa).

Residues Ser13, Trp14, and Lys108 each coordinate NADPH. The sn-glycerol 3-phosphate site is built by Lys108, Gly139, and Ser141. An NADPH-binding site is contributed by Ala143. 5 residues coordinate sn-glycerol 3-phosphate: Lys194, Asp247, Ser257, Arg258, and Asn259. Catalysis depends on Lys194, which acts as the Proton acceptor. Arg258 contacts NADPH. Residues Val282 and Glu284 each contribute to the NADPH site.

The protein belongs to the NAD-dependent glycerol-3-phosphate dehydrogenase family.

The protein resides in the cytoplasm. It catalyses the reaction sn-glycerol 3-phosphate + NAD(+) = dihydroxyacetone phosphate + NADH + H(+). The catalysed reaction is sn-glycerol 3-phosphate + NADP(+) = dihydroxyacetone phosphate + NADPH + H(+). It functions in the pathway membrane lipid metabolism; glycerophospholipid metabolism. Catalyzes the reduction of the glycolytic intermediate dihydroxyacetone phosphate (DHAP) to sn-glycerol 3-phosphate (G3P), the key precursor for phospholipid synthesis. The polypeptide is Glycerol-3-phosphate dehydrogenase [NAD(P)+] (Listeria monocytogenes serotype 4a (strain HCC23)).